A 1489-amino-acid chain; its full sequence is MGDAADPREMRKTFIVPAIKPFDHYDFSRAKIACNLAWLVAKAFGTENVPEELQEPFYTDQYDQEHIKPPVVNLLLSAELYCRAGSLILKSDAAKPLLGHDAVIQALAQKGLYVTDQEKLVTERDLHKKPIQMSAHLAMIDTLMMAYTVEMVSIEKVIACAQQYSAFFQATDLPYDIEDAVMYWINKVNEHLKDIMEQEQKLKEHHTVEAPGGQKSPSKWFWKLVPARYRKEQTLLKQLPCIPLVENLLKDGTDGCALAALIHFYCPDVVRLEDICLKETMSLADSLYNLQLIQEFCQEYLNQCCHFTLEDMLYAASSIKSNYLVFMAELFWWFEVVKPSFVQPRVVRPQGAEPVKDMPSIPVLNAAKRNVLDSSSDFPSSGEGATFTQSHHHLPSRYSRPQAHSSASGGIRRSSSMSYVDGFIGTWPKEKRSSVHGVSFDISFDKEDSVQRSTPNRGITRSISNEGLTLNNSHVSKHIRKNLSFKPINGEEEAESIEEELNIDSHSDLKSCVPLNTNELNSNENIHYKLPNGALQNRILLDEFGNQIETPSIEEALQIIHDTEKSPHTPQPDQIANGFFLHSQEMSILNSNIKLNQSSPDNVTDTKGALSPITDNTEVDTGIHVPSEDIPETMDEDSSLRDYTVSLDSDMDDASKFLQDYDIRTGNTREALSPCPSTVSTKSQPGSSASSSSGVKMTSFAEQKFRKLNHTDGKSSGSSSQKTTPEGSELNIPHVVAWAQIPEETGLPQGRDTTQLLASEMVHLRMKLEEKRRAIEAQKKKMEAAFTKQRQKMGRTAFLTVVKKKGDGISPLREEAAGAEDEKVYTDRAKEKESQKTDGQRSKSLADIKESMENPQAKWLKSPTTPIDPEKQWNLASPSEETLNEGEILEYTKSIEKLNSSLHFLQQEMQRLSLQQEMLMQMREQQSWVISPPQPSPQKQIRDFKPSKQAGLSSAIAPFSSDSPRPTHPSPQSSNRKSASFSVKSQRTPRPNELKITPLNRTLTPPRSVDSLPRLRRFSPSQVPIQTRSFVCFGDDGEPQLKESKPKEEVKKEELESKGTLEQRGHNPEEKEIKPFESTVSEVLSLPVTETVCLTPNEDQLNQPTEPPPKPVFPPTAPKNVNLIEVSLSDLKPPEKADVPVEKYDGESDKEQFDDDQKVCCGFFFKDDQKAENDMAMKRAALLEKRLRREKETQLRKQQLEAEMEHKKEETRRKTEEERQKKEDERARREFIRQEYMRRKQLKLMEDMDTVIKPRPQVVKQKKQRPKSIHRDHIESPKTPIKGPPVSSLSLASLNTGDNESVHSGKRTPRSESVEGFLSPSRCGSRNGEKDWENASTTSSVASGTEYTGPKLYKEPSAKSNKHIIQNALAHCCLAGKVNEGQKKKILEEMEKSDANNFLILFRDSGCQFRSLYTYCPETEEINKLTGIGPKSITKKMIEGLYKYNSDRKQFSHIPAKTLSASVDAITIHSHLWQTKRPVTPKKLLPTKA.

Residues 222–335 form the Calponin-homology (CH) domain; the sequence is WKLVPARYRK…FMAELFWWFE (114 aa). Positions 375-415 are disordered; that stretch reads SSDFPSSGEGATFTQSHHHLPSRYSRPQAHSSASGGIRRSS. A compositionally biased stretch (low complexity) spans 405 to 415; that stretch reads SSASGGIRRSS. Phosphoserine occurs at positions 416 and 418. Thr-426 carries the post-translational modification Phosphothreonine. Phosphoserine occurs at positions 464, 598, 599, 611, and 673. Disordered regions lie at residues 611–639 and 668–730; these read SPIT…EDSS and TREA…GSEL. A compositionally biased stretch (polar residues) spans 668-679; the sequence is TREALSPCPSTV. Phosphothreonine is present on Thr-678. Position 680 is a phosphoserine (Ser-680). Residues 680-699 are compositionally biased toward low complexity; it reads STKSQPGSSASSSSGVKMTS. Positions 703 to 713 are enriched in basic and acidic residues; the sequence is QKFRKLNHTDG. Positions 756–793 form a coiled coil; sequence LLASEMVHLRMKLEEKRRAIEAQKKKMEAAFTKQRQKM. Residues 812–844 form a disordered region; the sequence is LREEAAGAEDEKVYTDRAKEKESQKTDGQRSKS. Ser-862 carries the phosphoserine modification. A coiled-coil region spans residues 887-926; that stretch reads EILEYTKSIEKLNSSLHFLQQEMQRLSLQQEMLMQMREQQ. Positions 922–1034 are MBD region; that stretch reads MREQQSWVIS…IQTRSFVCFG (113 aa). Positions 925–1017 are disordered; the sequence is QQSWVISPPQ…SVDSLPRLRR (93 aa). Ser-931 and Ser-936 each carry phosphoserine. Residues 960–989 are compositionally biased toward polar residues; sequence SSDSPRPTHPSPQSSNRKSASFSVKSQRTP. Thr-997, Thr-1002, and Thr-1004 each carry phosphothreonine. A phosphoserine mark is found at Ser-1008 and Ser-1019. 3 disordered regions span residues 1032–1078, 1096–1152, and 1191–1349; these read CFGD…PFES, PNED…DKEQ, and KETQ…EYTG. Residues 1039–1075 are compositionally biased toward basic and acidic residues; that stretch reads PQLKESKPKEEVKKEELESKGTLEQRGHNPEEKEIKP. Residues 1105–1117 are compositionally biased toward pro residues; it reads TEPPPKPVFPPTA. Composition is skewed to basic and acidic residues over residues 1132-1152 and 1191-1252; these read KPPE…DKEQ and KETQ…DTVI. Ser-1148 is modified (phosphoserine). A coiled-coil region spans residues 1166-1238; that stretch reads KDDQKAENDM…REFIRQEYMR (73 aa). A compositionally biased stretch (polar residues) spans 1287–1299; sequence SSLSLASLNTGDN. Phosphoserine occurs at positions 1313, 1319, and 1321. A compositionally biased stretch (polar residues) spans 1334–1346; the sequence is NASTTSSVASGTE. Positions 1349–1483 constitute a CKK domain; it reads GPKLYKEPSA…QTKRPVTPKK (135 aa).

It belongs to the CAMSAP1 family. As to quaternary structure, interacts with CAMSAP3. Interacts with KATNA1 and KATNB1; leading to regulate the length of CAMSAP2-decorated microtubule stretches. Interacts with a complex formed by AKAP9 and PDE4DIP isoform 13/MMG8/SMYLE, which recruits CAMSAP2 to the Golgi. Interacts with MAPRE1/EB1.

The protein resides in the cytoplasm. The protein localises to the cytoskeleton. It localises to the golgi apparatus. It is found in the cilium basal body. Key microtubule-organizing protein that specifically binds the minus-end of non-centrosomal microtubules and regulates their dynamics and organization. Specifically recognizes growing microtubule minus-ends and autonomously decorates and stabilizes microtubule lattice formed by microtubule minus-end polymerization. Acts on free microtubule minus-ends that are not capped by microtubule-nucleating proteins or other factors and protects microtubule minus-ends from depolymerization. In addition, it also reduces the velocity of microtubule polymerization. Through the microtubule cytoskeleton, also regulates the organization of cellular organelles including the Golgi and the early endosomes. Essential for the tethering, but not for nucleation of non-centrosomal microtubules at the Golgi: together with Golgi-associated proteins AKAP9 and PDE4DIP, required to tether non-centrosomal minus-end microtubules to the Golgi, an important step for polarized cell movement. Also acts as a regulator of neuronal polarity and development: localizes to non-centrosomal microtubule minus-ends in neurons and stabilizes non-centrosomal microtubules, which is required for neuronal polarity, axon specification and dendritic branch formation. Through the microtubule cytoskeleton, regulates the autophagosome transport. In Homo sapiens (Human), this protein is Calmodulin-regulated spectrin-associated protein 2.